Reading from the N-terminus, the 338-residue chain is Ornithine carbamoyltransferase (338 aa).

At serine 2 the chain carries N-acetylserine. Residues serine 67 to threonine 70, arginine 118, histidine 145, and glutamine 148 each bind carbamoyl phosphate. L-ornithine is bound by residues asparagine 185, aspartate 249, serine 253, and methionine 254. Catalysis depends on cysteine 289, which acts as the Proton acceptor. Residues cysteine 289 to leucine 290 and arginine 316 each bind carbamoyl phosphate.

It belongs to the aspartate/ornithine carbamoyltransferase superfamily. OTCase family. In terms of assembly, interacts with CAR1.

The protein resides in the cytoplasm. It carries out the reaction carbamoyl phosphate + L-ornithine = L-citrulline + phosphate + H(+). It participates in amino-acid biosynthesis; L-arginine biosynthesis; L-arginine from L-ornithine and carbamoyl phosphate: step 1/3. With respect to regulation, forms a stable complex with CAR1 in the presence of ornithine and arginine. In this complex CAR1 retains activity, but ARG3 activity is inhibited. This chain is Ornithine carbamoyltransferase (ARG3), found in Saccharomyces cerevisiae (strain ATCC 204508 / S288c) (Baker's yeast).